The following is an 85-amino-acid chain: Large ribosomal subunit protein bL27 (85 aa).

A disordered region spans residues 1-20 (MATKKAGGSTRNGRDSEAKR).

Belongs to the bacterial ribosomal protein bL27 family.

This Actinobacillus succinogenes (strain ATCC 55618 / DSM 22257 / CCUG 43843 / 130Z) protein is Large ribosomal subunit protein bL27.